The following is a 48-amino-acid chain: MSKRGRGGTSGAKFRISLGLPVGAVMNCADNTGAKNLFVIAVYGIKGR.

It belongs to the universal ribosomal protein uL14 family.

This chain is Large ribosomal subunit protein uL14 (RPL23), found in Onchocerca volvulus.